The sequence spans 102 residues: Small ribosomal subunit protein uS10 (102 aa).

Belongs to the universal ribosomal protein uS10 family. As to quaternary structure, part of the 30S ribosomal subunit.

Functionally, involved in the binding of tRNA to the ribosomes. The chain is Small ribosomal subunit protein uS10 from Pelagibacter ubique (strain HTCC1062).